The following is a 390-amino-acid chain: Sorting nexin C1711.11 (390 aa).

Positions 1–123 (MLKCTIKNEQ…QFLENNSWKS (123 aa)) constitute a PX domain. 3 residues coordinate a 1,2-diacyl-sn-glycero-3-phospho-(1D-myo-inositol-3-phosphate): Arg44, Lys70, and Arg89.

The protein belongs to the sorting nexin family.

Its subcellular location is the cytoplasm. The protein resides in the membrane. This is Sorting nexin C1711.11 from Schizosaccharomyces pombe (strain 972 / ATCC 24843) (Fission yeast).